Here is an 86-residue protein sequence, read N- to C-terminus: Serine protease inhibitor Kazal-type 2 (86 aa).

The first 16 residues, 1–16, serve as a signal peptide directing secretion; that stretch reads MLRLVLLLLATDFAAS. One can recognise a Kazal-like domain in the interval 32–86; sequence QFRTPDCHRFDYPVCSKHLSPVCGTDMNTYGNECTLCMKIREDGSHINIIKDEPC. Cystine bridges form between Cys-38-Cys-68, Cys-46-Cys-65, and Cys-54-Cys-86.

The protein localises to the secreted. It is found in the cytoplasmic vesicle. It localises to the secretory vesicle. Its subcellular location is the acrosome. In terms of biological role, as a strong inhibitor of acrosin, it is required for normal spermiogenesis. It probably hinders premature activation of proacrosin and other proteases, thus preventing the cascade of events leading to spermiogenesis defects. May be involved in the regulation of serine protease-dependent germ cell apoptosis. It also inhibits trypsin. The sequence is that of Serine protease inhibitor Kazal-type 2 (Spink2) from Rattus norvegicus (Rat).